Reading from the N-terminus, the 254-residue chain is MPQQIELRNIALQAAQPLVHGVSLTLKRGRVLALVGGSGSGKSLTCAATLGILPAGVRQTAGEILADGKPVSPCALRGIKIATIMQNPRSAFNPLHTMHTHARETCLALGKPADDATLTAAIEAVGLENAARVLKLYPFEMSGGMLQRMMIAMAVLCESPFIIADEPTTDLDVVAQARILDLLESIMQKQAPGMLLVTHDMGVVARLADDVAVMSDGKIVEQGDVETLFNAPKHAVTRSLVSAHLALYGMELAS.

Residues 2–241 enclose the ABC transporter domain; the sequence is PQQIELRNIA…PKHAVTRSLV (240 aa). 36–43 serves as a coordination point for ATP; the sequence is GGSGSGKS.

It belongs to the ABC transporter superfamily. Nickel importer (TC 3.A.1.5.3) family. As to quaternary structure, the complex is composed of two ATP-binding proteins (NikD and NikE), two transmembrane proteins (NikB and NikC) and a solute-binding protein (NikA).

Its subcellular location is the cell inner membrane. The enzyme catalyses Ni(2+)(out) + ATP + H2O = Ni(2+)(in) + ADP + phosphate + H(+). In terms of biological role, part of the ABC transporter complex NikABCDE involved in nickel import. Responsible for energy coupling to the transport system. This is Nickel import ATP-binding protein NikD from Escherichia coli O157:H7.